The primary structure comprises 368 residues: Riboflavin biosynthesis protein RibD (368 aa).

The segment at 1 to 146 (MISDQTHMRR…EAFCFRIKHQ (146 aa)) is deaminase. The CMP/dCMP-type deaminase domain maps to 2–124 (ISDQTHMRRC…RLRQAGIEVK (123 aa)). Residue H51 participates in Zn(2+) binding. The active-site Proton donor is the E53. C76 and C85 together coordinate Zn(2+). The segment at 147–368 (RPFGIFKYAM…GNDDNGQSNI (222 aa)) is reductase. Residue A155 participates in NADP(+) binding. Position 169 (S169) interacts with substrate. W171 serves as a coordination point for NADP(+). Residue R185 participates in substrate binding. NADP(+) is bound by residues T197 and D201. 2 residues coordinate substrate: L205 and E289. 291-297 (GGILAAE) contacts NADP(+).

It in the N-terminal section; belongs to the cytidine and deoxycytidylate deaminase family. The protein in the C-terminal section; belongs to the HTP reductase family. It depends on Zn(2+) as a cofactor.

The catalysed reaction is 2,5-diamino-6-hydroxy-4-(5-phosphoribosylamino)-pyrimidine + H2O + H(+) = 5-amino-6-(5-phospho-D-ribosylamino)uracil + NH4(+). It carries out the reaction 5-amino-6-(5-phospho-D-ribitylamino)uracil + NADP(+) = 5-amino-6-(5-phospho-D-ribosylamino)uracil + NADPH + H(+). It functions in the pathway cofactor biosynthesis; riboflavin biosynthesis; 5-amino-6-(D-ribitylamino)uracil from GTP: step 2/4. It participates in cofactor biosynthesis; riboflavin biosynthesis; 5-amino-6-(D-ribitylamino)uracil from GTP: step 3/4. Functionally, converts 2,5-diamino-6-(ribosylamino)-4(3h)-pyrimidinone 5'-phosphate into 5-amino-6-(ribosylamino)-2,4(1h,3h)-pyrimidinedione 5'-phosphate. The chain is Riboflavin biosynthesis protein RibD (ribD) from Synechocystis sp. (strain ATCC 27184 / PCC 6803 / Kazusa).